A 212-amino-acid chain; its full sequence is Imidazole glycerol phosphate synthase subunit HisH (212 aa).

Residues 3 to 212 (TVAVIDYGMG…QNFIAWDGRW (210 aa)) form the Glutamine amidotransferase type-1 domain. Cys81 acts as the Nucleophile in catalysis. Catalysis depends on residues His190 and Glu192.

In terms of assembly, heterodimer of HisH and HisF.

It is found in the cytoplasm. It catalyses the reaction 5-[(5-phospho-1-deoxy-D-ribulos-1-ylimino)methylamino]-1-(5-phospho-beta-D-ribosyl)imidazole-4-carboxamide + L-glutamine = D-erythro-1-(imidazol-4-yl)glycerol 3-phosphate + 5-amino-1-(5-phospho-beta-D-ribosyl)imidazole-4-carboxamide + L-glutamate + H(+). The catalysed reaction is L-glutamine + H2O = L-glutamate + NH4(+). It participates in amino-acid biosynthesis; L-histidine biosynthesis; L-histidine from 5-phospho-alpha-D-ribose 1-diphosphate: step 5/9. Its function is as follows. IGPS catalyzes the conversion of PRFAR and glutamine to IGP, AICAR and glutamate. The HisH subunit catalyzes the hydrolysis of glutamine to glutamate and ammonia as part of the synthesis of IGP and AICAR. The resulting ammonia molecule is channeled to the active site of HisF. This Pseudomonas putida (strain ATCC 47054 / DSM 6125 / CFBP 8728 / NCIMB 11950 / KT2440) protein is Imidazole glycerol phosphate synthase subunit HisH.